Consider the following 350-residue polypeptide: Protein FAM118B (350 aa).

A2 bears the N-acetylalanine mark. S9 carries the phosphoserine modification.

Belongs to the FAM118 family.

The protein localises to the nucleus. It localises to the cajal body. Functionally, may play a role in Cajal bodies formation. This is Protein FAM118B (FAM118B) from Macaca fascicularis (Crab-eating macaque).